An 834-amino-acid polypeptide reads, in one-letter code: Periplasmic nitrate reductase (834 aa).

The segment at residues 1 to 31 (MTGELTRREMLKAHAAGIAAATAGIALPAAA) is a signal peptide (tat-type signal). The 4Fe-4S Mo/W bis-MGD-type domain maps to 43-99 (ITWSKAPCRFCGTGCGVMVGVKEGQVVATHGDMQAEVNRGLNCIKGYFLSKIMYGTD). Residues Cys-50, Cys-53, Cys-57, and Cys-85 each coordinate [4Fe-4S] cluster. Mo-bis(molybdopterin guanine dinucleotide)-binding positions include Lys-87, Gln-154, Asn-179, Cys-183, 216-223 (WGSNMAEM), 247-251 (STFTH), 266-268 (GTD), Met-377, Gln-381, Asn-487, 513-514 (SD), Lys-536, Asp-563, and 723-732 (TGRVLEHWHS). Substrate is bound at residue Trp-799. Mo-bis(molybdopterin guanine dinucleotide) is bound by residues Asn-807 and Lys-824.

It belongs to the prokaryotic molybdopterin-containing oxidoreductase family. NasA/NapA/NarB subfamily. In terms of assembly, component of the periplasmic nitrate reductase NapAB complex composed of NapA and NapB. It depends on [4Fe-4S] cluster as a cofactor. Mo-bis(molybdopterin guanine dinucleotide) is required as a cofactor. Predicted to be exported by the Tat system. The position of the signal peptide cleavage has not been experimentally proven.

It localises to the periplasm. The catalysed reaction is 2 Fe(II)-[cytochrome] + nitrate + 2 H(+) = 2 Fe(III)-[cytochrome] + nitrite + H2O. In terms of biological role, catalytic subunit of the periplasmic nitrate reductase complex NapAB. Receives electrons from NapB and catalyzes the reduction of nitrate to nitrite. This Rhizobium meliloti (strain 1021) (Ensifer meliloti) protein is Periplasmic nitrate reductase.